We begin with the raw amino-acid sequence, 378 residues long: Dual-specificity RNA methyltransferase RlmN 2 (378 aa).

Catalysis depends on Glu113, which acts as the Proton acceptor. Positions 119–355 constitute a Radical SAM core domain; the sequence is TEDRRTLCVS…AAYIRRNRGR (237 aa). A disulfide bridge links Cys126 with Cys361. Cys133, Cys137, and Cys140 together coordinate [4Fe-4S] cluster. S-adenosyl-L-methionine is bound by residues 188 to 189, Ser220, 242 to 244, and Asn318; these read GE and SLN. Cys361 serves as the catalytic S-methylcysteine intermediate.

It belongs to the radical SAM superfamily. RlmN family. It depends on [4Fe-4S] cluster as a cofactor.

It is found in the cytoplasm. It carries out the reaction adenosine(2503) in 23S rRNA + 2 reduced [2Fe-2S]-[ferredoxin] + 2 S-adenosyl-L-methionine = 2-methyladenosine(2503) in 23S rRNA + 5'-deoxyadenosine + L-methionine + 2 oxidized [2Fe-2S]-[ferredoxin] + S-adenosyl-L-homocysteine. It catalyses the reaction adenosine(37) in tRNA + 2 reduced [2Fe-2S]-[ferredoxin] + 2 S-adenosyl-L-methionine = 2-methyladenosine(37) in tRNA + 5'-deoxyadenosine + L-methionine + 2 oxidized [2Fe-2S]-[ferredoxin] + S-adenosyl-L-homocysteine. Functionally, specifically methylates position 2 of adenine 2503 in 23S rRNA and position 2 of adenine 37 in tRNAs. m2A2503 modification seems to play a crucial role in the proofreading step occurring at the peptidyl transferase center and thus would serve to optimize ribosomal fidelity. The sequence is that of Dual-specificity RNA methyltransferase RlmN 2 from Myxococcus xanthus (strain DK1622).